A 93-amino-acid chain; its full sequence is Allatostatin C (93 aa).

The signal sequence occupies residues 1–23 (MSSVRNIAALALVLLVLAEWSAA). Positions 24-61 (MPTTDKDKERLLNTVDLIDDDGSIETALINYLFTKQIV) are excised as a propeptide. C83 and C90 form a disulfide bridge.

Its subcellular location is the secreted. In terms of biological role, inhibits juvenile hormone biosynthesis. The polypeptide is Allatostatin C (Camponotus floridanus (Florida carpenter ant)).